The following is a 259-amino-acid chain: Kynurenine formamidase (259 aa).

Residues His-34 to Trp-38 carry the HGGXW motif. Catalysis depends on Ser-103, which acts as the Nucleophile. Residues Asp-196 and His-228 contribute to the active site.

This sequence belongs to the kynurenine formamidase family. As to quaternary structure, homodimer.

It carries out the reaction N-formyl-L-kynurenine + H2O = L-kynurenine + formate + H(+). The protein operates within amino-acid degradation; L-tryptophan degradation via kynurenine pathway; L-kynurenine from L-tryptophan: step 2/2. Its function is as follows. Catalyzes the hydrolysis of N-formyl-L-kynurenine to L-kynurenine, the second step in the kynurenine pathway of tryptophan degradation. Kynurenine may be further oxidized to nicotinic acid, NAD(H) and NADP(H). Required for elimination of toxic metabolites. The sequence is that of Kynurenine formamidase from Meyerozyma guilliermondii (strain ATCC 6260 / CBS 566 / DSM 6381 / JCM 1539 / NBRC 10279 / NRRL Y-324) (Yeast).